The primary structure comprises 233 residues: C-type lectin domain family 2 member D6 (233 aa).

Residues 1–45 (MPSSAHLQDSPPLLSRTLTQNEGQTSLRQSSSCGPSATSASESLS) form a disordered region. Topologically, residues 1–73 (MPSSAHLQDS…GIILPESPAK (73 aa)) are cytoplasmic. The segment covering 16-29 (RTLTQNEGQTSLRQ) has biased composition (polar residues). Low complexity predominate over residues 30–43 (SSSCGPSATSASES). Residues 74–94 (LLCCCAVIVVLSVAVVALSVA) traverse the membrane as a helical; Signal-anchor for type II membrane protein segment. The Extracellular segment spans residues 95–233 (LSVKKTPQIS…KLNSYTSQCQ (139 aa)). Positions 119–230 (VGNKCYYFNE…ICSKLNSYTS (112 aa)) constitute a C-type lectin domain. Asn132 carries N-linked (GlcNAc...) asparagine glycosylation.

It is found in the cell membrane. Functionally, lectin-type cell surface receptor. This is C-type lectin domain family 2 member D6 (Clec2d6) from Rattus norvegicus (Rat).